The chain runs to 440 residues: Phosphoglycerate kinase, glycosomal (440 aa).

Val-23, Asp-24, Phe-25, Asn-26, Arg-39, Ser-61, His-62, Gly-64, Arg-65, Arg-135, His-171, and Arg-172 together coordinate (2R)-3-phosphoglycerate. Gly-217 lines the CDP pocket. Ala-218 provides a ligand contact to ADP. Residues Ala-218 and Lys-219 each contribute to the AMP site. Ala-218 lines the ATP pocket. Residue Ala-218 participates in Mg(2+) binding. Lys-219 contacts (2R)-3-phosphoglycerate. Residue Asp-222 participates in CDP binding. Asp-222 lines the Mg(2+) pocket. Residues Lys-223 and Gly-241 each contribute to the ADP site. Lys-223 is a binding site for AMP. Position 241 (Gly-241) interacts with CDP. Positions 242 and 314 each coordinate AMP. Residues Ala-242 and Ala-314 each coordinate ATP. 2 residues coordinate ADP: Ala-314 and Asn-338. CDP contacts are provided by Gly-339 and Phe-344. Phe-344, Glu-345, Asp-377, and Ser-378 together coordinate ADP. Glu-345 is an AMP binding site. Residues Asp-377 and Ser-378 each contribute to the ATP site. Asp-377 serves as a coordination point for Mg(2+).

It belongs to the phosphoglycerate kinase family. As to quaternary structure, monomer. Mg(2+) is required as a cofactor.

Its subcellular location is the glycosome. It catalyses the reaction (2R)-3-phosphoglycerate + ATP = (2R)-3-phospho-glyceroyl phosphate + ADP. It participates in carbohydrate degradation; glycolysis; pyruvate from D-glyceraldehyde 3-phosphate: step 2/5. This is Phosphoglycerate kinase, glycosomal from Trypanosoma brucei brucei.